We begin with the raw amino-acid sequence, 113 residues long: Meiotically up-regulated gene 98 protein, mitochondrial (113 aa).

The protein localises to the mitochondrion. Has a role in meiosis. The sequence is that of Meiotically up-regulated gene 98 protein, mitochondrial (mug98) from Schizosaccharomyces pombe (strain 972 / ATCC 24843) (Fission yeast).